A 428-amino-acid chain; its full sequence is Enolase (428 aa).

Glutamine 163 is a (2R)-2-phosphoglycerate binding site. Catalysis depends on glutamate 205, which acts as the Proton donor. Residues aspartate 242, glutamate 285, and aspartate 312 each contribute to the Mg(2+) site. (2R)-2-phosphoglycerate contacts are provided by lysine 337, arginine 366, serine 367, and lysine 388. The active-site Proton acceptor is the lysine 337.

This sequence belongs to the enolase family. The cofactor is Mg(2+).

It localises to the cytoplasm. It is found in the secreted. Its subcellular location is the cell surface. The enzyme catalyses (2R)-2-phosphoglycerate = phosphoenolpyruvate + H2O. It functions in the pathway carbohydrate degradation; glycolysis; pyruvate from D-glyceraldehyde 3-phosphate: step 4/5. Catalyzes the reversible conversion of 2-phosphoglycerate (2-PG) into phosphoenolpyruvate (PEP). It is essential for the degradation of carbohydrates via glycolysis. The sequence is that of Enolase from Brevibacillus brevis (strain 47 / JCM 6285 / NBRC 100599).